Reading from the N-terminus, the 366-residue chain is Chorismate synthase (366 aa).

Residue arginine 47 coordinates NADP(+). FMN contacts are provided by residues 124–126 (RSS), glycine 286, 301–305 (KPVAT), and arginine 327.

This sequence belongs to the chorismate synthase family. Homotetramer. FMNH2 serves as cofactor.

It catalyses the reaction 5-O-(1-carboxyvinyl)-3-phosphoshikimate = chorismate + phosphate. Its pathway is metabolic intermediate biosynthesis; chorismate biosynthesis; chorismate from D-erythrose 4-phosphate and phosphoenolpyruvate: step 7/7. Functionally, catalyzes the anti-1,4-elimination of the C-3 phosphate and the C-6 proR hydrogen from 5-enolpyruvylshikimate-3-phosphate (EPSP) to yield chorismate, which is the branch point compound that serves as the starting substrate for the three terminal pathways of aromatic amino acid biosynthesis. This reaction introduces a second double bond into the aromatic ring system. The polypeptide is Chorismate synthase (Methylacidiphilum infernorum (isolate V4) (Methylokorus infernorum (strain V4))).